A 72-amino-acid chain; its full sequence is Translation initiation factor IF-1 (72 aa).

Positions 1 to 72 (MAKDDVIEVE…TRGRITYRYK (72 aa)) constitute an S1-like domain. Tyr60 bears the Phosphotyrosine mark.

The protein belongs to the IF-1 family. In terms of assembly, component of the 30S ribosomal translation pre-initiation complex which assembles on the 30S ribosome in the order IF-2 and IF-3, IF-1 and N-formylmethionyl-tRNA(fMet); mRNA recruitment can occur at any time during PIC assembly.

Its subcellular location is the cytoplasm. In terms of biological role, one of the essential components for the initiation of protein synthesis. Stabilizes the binding of IF-2 and IF-3 on the 30S subunit to which N-formylmethionyl-tRNA(fMet) subsequently binds. Helps modulate mRNA selection, yielding the 30S pre-initiation complex (PIC). Upon addition of the 50S ribosomal subunit IF-1, IF-2 and IF-3 are released leaving the mature 70S translation initiation complex. The polypeptide is Translation initiation factor IF-1 (Geobacillus kaustophilus (strain HTA426)).